A 432-amino-acid polypeptide reads, in one-letter code: Meiotically up-regulated gene 134 protein (432 aa).

It belongs to the UPF0300 family.

The protein localises to the cytoplasm. It localises to the cell cortex. Functionally, has a role in meiosis. In Schizosaccharomyces pombe (strain 972 / ATCC 24843) (Fission yeast), this protein is Meiotically up-regulated gene 134 protein (mug134).